Here is a 366-residue protein sequence, read N- to C-terminus: 4-hydroxy-3-methylbut-2-en-1-yl diphosphate synthase (flavodoxin) (366 aa).

4 residues coordinate [4Fe-4S] cluster: Cys270, Cys273, Cys305, and Glu312.

This sequence belongs to the IspG family. It depends on [4Fe-4S] cluster as a cofactor.

The catalysed reaction is (2E)-4-hydroxy-3-methylbut-2-enyl diphosphate + oxidized [flavodoxin] + H2O + 2 H(+) = 2-C-methyl-D-erythritol 2,4-cyclic diphosphate + reduced [flavodoxin]. It participates in isoprenoid biosynthesis; isopentenyl diphosphate biosynthesis via DXP pathway; isopentenyl diphosphate from 1-deoxy-D-xylulose 5-phosphate: step 5/6. Its function is as follows. Converts 2C-methyl-D-erythritol 2,4-cyclodiphosphate (ME-2,4cPP) into 1-hydroxy-2-methyl-2-(E)-butenyl 4-diphosphate. In Acidithiobacillus ferrooxidans (strain ATCC 53993 / BNL-5-31) (Leptospirillum ferrooxidans (ATCC 53993)), this protein is 4-hydroxy-3-methylbut-2-en-1-yl diphosphate synthase (flavodoxin).